We begin with the raw amino-acid sequence, 336 residues long: NADH-quinone oxidoreductase subunit H (336 aa).

8 helical membrane-spanning segments follow: residues 4–24 (YILW…LVVA), 75–95 (YLFF…WAVI), 108–128 (LGLL…VIAG), 154–174 (MGFA…TGII), 181–201 (IWHW…IAGI), 233–253 (LFFL…SIMF), 272–292 (FVPG…MFLW), and 308–328 (LGWK…ACMV).

The protein belongs to the complex I subunit 1 family. NDH-1 is composed of 14 different subunits. Subunits NuoA, H, J, K, L, M, N constitute the membrane sector of the complex.

It localises to the cell inner membrane. It carries out the reaction a quinone + NADH + 5 H(+)(in) = a quinol + NAD(+) + 4 H(+)(out). Its function is as follows. NDH-1 shuttles electrons from NADH, via FMN and iron-sulfur (Fe-S) centers, to quinones in the respiratory chain. The immediate electron acceptor for the enzyme in this species is believed to be ubiquinone. Couples the redox reaction to proton translocation (for every two electrons transferred, four hydrogen ions are translocated across the cytoplasmic membrane), and thus conserves the redox energy in a proton gradient. This subunit may bind ubiquinone. The sequence is that of NADH-quinone oxidoreductase subunit H from Francisella tularensis subsp. mediasiatica (strain FSC147).